We begin with the raw amino-acid sequence, 337 residues long: MGFTYKDSGVDIDAADLSVQMIKRYARQTHIDGVLGDIGNFGAFFQLDGSLRQPVLVSGADGVGTKLKVAFMMDKHDTVGIDCVAMCVNDILVHGARPLFFLDYIAVGKLIPEKISQIVKGIAEGCTQAGCALIGGETAQMPDMYKEEEYDLAGFAVGVVEREKLLDGSKIKQRDAVIGLASSGLHSNGFSLVRKVLLGKMKVDEYISDLKKTLGEELLTPTKIYVRTVLDVLNDKIHGMAHITGGGLLENLPRILPEGLEFRIDKNSWEVPVIFKIIQRLGKIDSKEMYRTFNMGIGFVMVVERDEVENLLRKLNELGQNAWVIGDIVPGEKGVII.

This sequence belongs to the AIR synthase family.

The protein localises to the cytoplasm. It catalyses the reaction 2-formamido-N(1)-(5-O-phospho-beta-D-ribosyl)acetamidine + ATP = 5-amino-1-(5-phospho-beta-D-ribosyl)imidazole + ADP + phosphate + H(+). The protein operates within purine metabolism; IMP biosynthesis via de novo pathway; 5-amino-1-(5-phospho-D-ribosyl)imidazole from N(2)-formyl-N(1)-(5-phospho-D-ribosyl)glycinamide: step 2/2. This chain is Phosphoribosylformylglycinamidine cyclo-ligase, found in Pseudothermotoga lettingae (strain ATCC BAA-301 / DSM 14385 / NBRC 107922 / TMO) (Thermotoga lettingae).